We begin with the raw amino-acid sequence, 299 residues long: Protoheme IX farnesyltransferase (299 aa).

Transmembrane regions (helical) follow at residues 24-44 (VVALMMLTAVVGMLLASDQGM), 46-66 (WNALILGNLGIALLASSAAAI), 94-114 (VHALTFAFSLAVVGMAILAWG), 118-138 (LTAWLTLASLIGYAVVYTLFL), 146-166 (IVLGGLAGAAPPLLGWTSVTG), 172-192 (ALLLVLIIFAWTPPHFWALAV), 232-252 (LPFITGMCGWIYFVAALALGV), and 278-298 (ITYLMLLFVALLADHYIPVTL).

It belongs to the UbiA prenyltransferase family. Protoheme IX farnesyltransferase subfamily.

Its subcellular location is the cell inner membrane. It catalyses the reaction heme b + (2E,6E)-farnesyl diphosphate + H2O = Fe(II)-heme o + diphosphate. Its pathway is porphyrin-containing compound metabolism; heme O biosynthesis; heme O from protoheme: step 1/1. Functionally, converts heme B (protoheme IX) to heme O by substitution of the vinyl group on carbon 2 of heme B porphyrin ring with a hydroxyethyl farnesyl side group. The polypeptide is Protoheme IX farnesyltransferase (Hahella chejuensis (strain KCTC 2396)).